Consider the following 119-residue polypeptide: Secreted RxLR effector protein RXLR-C04 (119 aa).

Positions 1–22 (MRLSYIFVVVATIITNCDIASA) are cleaved as a signal peptide. Positions 40 to 77 (RILRQTNDSDDLEPIRHAMLDMELLEKIAKDPKYAEEV) match the RxLR-dEER motif. An N-linked (GlcNAc...) asparagine glycan is attached at Asn-46.

Belongs to the RxLR effector family.

Its subcellular location is the secreted. The protein localises to the host cytoplasm. It localises to the host nucleus. In terms of biological role, secreted effector that suppresses pattern-triggered immunity (PTI) in plant host. This is Secreted RxLR effector protein RXLR-C04 from Plasmopara halstedii (Downy mildew of sunflower).